Reading from the N-terminus, the 301-residue chain is Glycine--tRNA ligase alpha subunit (301 aa).

Belongs to the class-II aminoacyl-tRNA synthetase family. In terms of assembly, tetramer of two alpha and two beta subunits.

The protein resides in the cytoplasm. It catalyses the reaction tRNA(Gly) + glycine + ATP = glycyl-tRNA(Gly) + AMP + diphosphate. The protein is Glycine--tRNA ligase alpha subunit of Nitrosospira multiformis (strain ATCC 25196 / NCIMB 11849 / C 71).